Here is a 1061-residue protein sequence, read N- to C-terminus: Zinc finger protein ZFPM1 (1061 aa).

The segment at 152–185 (VVNKDVFPCKDCGIWYRSERNLQAHLMYYCASRQ) adopts a CCHC FOG-type 1 zinc-finger fold. Cys-160, Cys-163, His-176, and Cys-181 together coordinate Zn(2+). C2H2-type zinc fingers lie at residues 204-228 (RICP…MRSH), 234-256 (FVCL…LKVH), and 262-285 (GVCH…VTNH). Disordered stretches follow at residues 349 to 393 (PSAT…SEET) and 435 to 455 (TEMS…GAAT). The segment covering 378 to 388 (SPISSSSSASS) has biased composition (low complexity). The segment covering 436–448 (EMSSPTPGSSPVP) has biased composition (polar residues). The CCHC FOG-type 2 zinc-finger motif lies at 508–541 (SAVPKGATCFECEITFNNINNYYVHKRLYCSGRH). Zn(2+) is bound by residues Cys-516, Cys-519, His-532, and Cys-537. Disordered stretches follow at residues 561–586 (ALAS…ESSA) and 599–630 (MDCE…NRTV). Over residues 565-574 (GFSSTEQEAS) the composition is skewed to polar residues. The CCHC FOG-type 3 zinc finger occupies 623–656 (EEDPNRTVCGACNIRFSRHETYVVHKRYYCASRH). Residues Cys-631, Cys-634, His-647, and Cys-652 each contribute to the Zn(2+) site. Positions 661 to 681 (RRREVNKPGPPYTTQPTPRTR) are disordered. The tract at residues 736–742 (PIDLSKK) is interaction with CTBP. The CCHC FOG-type 4 zinc finger occupies 759–792 (APLADYHECTACRISFNSLESYLAHKKFSCPTAP). Zn(2+) contacts are provided by Cys-767, Cys-770, His-783, and Cys-788. A C2H2-type 4 zinc finger spans residues 869 to 892 (TTCPYCPHNVIIRGDLLEHFRSVH). A disordered region spans residues 917–1021 (RGQTSSASEN…MQPPKPSLIS (105 aa)). Composition is skewed to low complexity over residues 933 to 942 (VSSASPLQLP) and 954 to 972 (TTSS…STPR). Residues 973 to 984 (PLLPTSPAPPSN) are compositionally biased toward pro residues. The CCHC FOG-type 5 zinc-finger motif lies at 1023–1056 (VPNGNHRYCRLCNIKFSSLSTFIAHKKYYCSSHA). Residues Cys-1031, Cys-1034, His-1047, and Cys-1052 each coordinate Zn(2+).

It belongs to the FOG (Friend of GATA) family. As to quaternary structure, interacts with corepressor CTBP. Interacts with the N-terminal zinc-finger of GATA1 and probably GATA2. Predominantly expressed in heart and brain. Also expressed in ventral blood island and adult spleen.

The protein resides in the nucleus. In terms of biological role, transcription regulator that plays an central role in red blood cell differentiation. Essential cofactor that acts via the formation of a heterodimer with transcription factors of the GATA family GATA1 and GATA2. Such heterodimer can both activate or repress transcriptional activity, depending on the cell and promoter context. Acts as a repressor of red blood cells, probably by modulating activity of GATA1. The chain is Zinc finger protein ZFPM1 (zfpm1) from Xenopus laevis (African clawed frog).